A 206-amino-acid polypeptide reads, in one-letter code: LexA repressor (206 aa).

Residues 28 to 48 (VREIGEAVGLASSSTVHGHLD) constitute a DNA-binding region (H-T-H motif). Active-site for autocatalytic cleavage activity residues include S128 and K166.

This sequence belongs to the peptidase S24 family. In terms of assembly, homodimer.

It carries out the reaction Hydrolysis of Ala-|-Gly bond in repressor LexA.. Represses a number of genes involved in the response to DNA damage (SOS response), including recA and lexA. In the presence of single-stranded DNA, RecA interacts with LexA causing an autocatalytic cleavage which disrupts the DNA-binding part of LexA, leading to derepression of the SOS regulon and eventually DNA repair. The protein is LexA repressor of Exiguobacterium sp. (strain ATCC BAA-1283 / AT1b).